Here is a 256-residue protein sequence, read N- to C-terminus: Small ribosomal subunit protein eS1 (256 aa).

A2 is modified (N-acetylalanine; partial).

This sequence belongs to the eukaryotic ribosomal protein eS1 family. As to quaternary structure, component of the small ribosomal subunit. Mature ribosomes consist of a small (40S) and a large (60S) subunit. The 40S subunit contains about 33 different proteins and 1 molecule of RNA (18S). The 60S subunit contains about 49 different proteins and 3 molecules of RNA (25S, 5.8S and 5S).

It is found in the cytoplasm. The polypeptide is Small ribosomal subunit protein eS1 (Fusarium vanettenii (strain ATCC MYA-4622 / CBS 123669 / FGSC 9596 / NRRL 45880 / 77-13-4) (Fusarium solani subsp. pisi)).